The chain runs to 876 residues: Phosphoenolpyruvate carboxylase (876 aa).

Catalysis depends on residues His138 and Lys543.

Belongs to the PEPCase type 1 family. It depends on Mg(2+) as a cofactor.

It catalyses the reaction oxaloacetate + phosphate = phosphoenolpyruvate + hydrogencarbonate. In terms of biological role, forms oxaloacetate, a four-carbon dicarboxylic acid source for the tricarboxylic acid cycle. This is Phosphoenolpyruvate carboxylase from Aliivibrio salmonicida (strain LFI1238) (Vibrio salmonicida (strain LFI1238)).